The following is a 163-amino-acid chain: Large ribosomal subunit protein uL10 (163 aa).

It belongs to the universal ribosomal protein uL10 family. As to quaternary structure, part of the ribosomal stalk of the 50S ribosomal subunit. The N-terminus interacts with L11 and the large rRNA to form the base of the stalk. The C-terminus forms an elongated spine to which L12 dimers bind in a sequential fashion forming a multimeric L10(L12)X complex.

Its function is as follows. Forms part of the ribosomal stalk, playing a central role in the interaction of the ribosome with GTP-bound translation factors. The sequence is that of Large ribosomal subunit protein uL10 from Haemophilus influenzae (strain PittEE).